The sequence spans 886 residues: MNSVNNIRSTFLDYFHRNGHEVLSSSPLVPRNDPTLMFTNAGMVDFKNVFTGLEKHSYNRATTAQKCVRAGGKHNDLDNVGYTARHHTFFEMLGNFSFSNYFKEEAIFYAWNLLTKEFCLSKDKLLVTVYHDDDVAAGLWRKISGLSEEKIIRIATNDNFWMMGDTGPCGPCSEIFYDHGDKIWGGPPGSADEDGDRFIEIWNLVFMQYEQLSKEKRIELPQPSIDTGMGLERIAAVLQGVHDNYDIDLFRTLIHASQEIIGVKATGDFFASHRVIADHLRSSAFLIADGIMPSNEGRGYVLRRIMRRAMRHAHLLGSKDLLMWRLVPVLISEMGQAYPELVRAESLISEILKLEETRFRKTLERGLGLLNEASTHLEEGDYFNGEVAFKLYDTYGFPLDLTQDALRRRGISVDVDAFDKAMKRQKAEARANWSGSGDCVTETVWFSIRDQVGATEFLGYETEKAEGIITALIRDGEVVDHIDLGQKAMIVVNQTPFYGESGGQVGDSGIISGANFIFEVHDTQKKGDNVFIHIGEIKTGQAKKHDCVELIVDSARRRKIRANHSATHLLHESLRQTLGSHVVQKGSFVSPDRLRFDFSHPKSISSEELKKIEDLANDIVLQNSKVTTRLMAIDDAIAEGAMALFGEKYGDEVRVISMGNNLEQTGSKKWWSIELCGGTHVQRTGDIGLIHIISETSVAAGVRRIEALTATAARLYLHGQDRRVYEIAGLLKTSPADVQERVQTLLDERRKLEKELNDSRKKIALNGGSVNSQGDIQTINGISFMGGVVSNILPKDLKALVDSGKKKIGSGVVAFISVSEDGKGSAVVGVTDDLTDTLNAVDLVRIISVTLGGQGGGGRRDMAQAGGSEGGKADEALVALKDSLKG.

Zn(2+) contacts are provided by H564, H568, C676, and H680.

This sequence belongs to the class-II aminoacyl-tRNA synthetase family. Zn(2+) is required as a cofactor.

It localises to the cytoplasm. The catalysed reaction is tRNA(Ala) + L-alanine + ATP = L-alanyl-tRNA(Ala) + AMP + diphosphate. In terms of biological role, catalyzes the attachment of alanine to tRNA(Ala) in a two-step reaction: alanine is first activated by ATP to form Ala-AMP and then transferred to the acceptor end of tRNA(Ala). Also edits incorrectly charged Ser-tRNA(Ala) and Gly-tRNA(Ala) via its editing domain. In Bartonella bacilliformis, this protein is Alanine--tRNA ligase.